A 175-amino-acid polypeptide reads, in one-letter code: MGYLRNIGAIAKGMGITFSEMFKPTTVENYPDGPGVLRGAVFQERFRGMHVLQRDENGLEKCVACFLCAAACPSNCIYIEAAENTETNRVSGAERYAKVYNIDYNRCIFCGYCVEACPTDAITHGHGFELATFNASNLVYRKEQLLSGKPAHIGANEIFASDSREQQRLDQKAAK.

2 consecutive 4Fe-4S ferredoxin-type domains span residues 50–82 (HVLQRDENGLEKCVACFLCAAACPSNCIYIEAA) and 98–127 (KVYNIDYNRCIFCGYCVEACPTDAITHGHG). C62, C65, C68, C72, C107, C110, C113, and C117 together coordinate [4Fe-4S] cluster.

It belongs to the complex I 23 kDa subunit family. As to quaternary structure, NDH-1 is composed of 14 different subunits. Subunits NuoA, H, J, K, L, M, N constitute the membrane sector of the complex. [4Fe-4S] cluster serves as cofactor.

It is found in the cell inner membrane. The enzyme catalyses a quinone + NADH + 5 H(+)(in) = a quinol + NAD(+) + 4 H(+)(out). Functionally, NDH-1 shuttles electrons from NADH, via FMN and iron-sulfur (Fe-S) centers, to quinones in the respiratory chain. The immediate electron acceptor for the enzyme in this species is believed to be ubiquinone. Couples the redox reaction to proton translocation (for every two electrons transferred, four hydrogen ions are translocated across the cytoplasmic membrane), and thus conserves the redox energy in a proton gradient. The chain is NADH-quinone oxidoreductase subunit I 2 from Koribacter versatilis (strain Ellin345).